Consider the following 181-residue polypeptide: Mannose-specific lectin (181 aa).

An N-terminal signal peptide occupies residues 1–30 (MGRTTSSPKAMMRIATVAAILTILASTCMA). Residues 31–140 (RNVLTNGEGL…DIWSTGTYRR (110 aa)) form the Bulb-type lectin domain. Alpha-D-mannopyranose-binding residues include Gln56, Asp58, Asn60, Tyr64, Trp71, Ala72, Asn74, Gln88, Asp90, Asn92, Tyr96, Val103, Trp104, Asn107, Asn114, Gln120, Asp122, Asn124, Tyr128, and Trp133. Cys59 and Cys83 form a disulfide bridge.

As to quaternary structure, homodimer.

It is found in the secreted. In terms of biological role, mannose-specific lectin. Shows agglutinating activity towards rabbit erythrocytes. However, it does not show agglutinating activity towards human erythrocytes. Has insecticidal activity against the cotton leafworm S.littoralis and the peach potato aphid M.persicae. Also displays antiviral activity and therefore may contribute to defense against infections. The polypeptide is Mannose-specific lectin (Allium sativum (Garlic)).